The primary structure comprises 272 residues: 3-methyl-2-oxobutanoate hydroxymethyltransferase (272 aa).

2 residues coordinate Mg(2+): Asp42 and Asp86. Residues 42 to 43 (DS), Asp86, and Lys116 contribute to the 3-methyl-2-oxobutanoate site. Glu118 lines the Mg(2+) pocket. Glu185 serves as the catalytic Proton acceptor.

This sequence belongs to the PanB family. In terms of assembly, homodecamer; pentamer of dimers. It depends on Mg(2+) as a cofactor.

Its subcellular location is the cytoplasm. The enzyme catalyses 3-methyl-2-oxobutanoate + (6R)-5,10-methylene-5,6,7,8-tetrahydrofolate + H2O = 2-dehydropantoate + (6S)-5,6,7,8-tetrahydrofolate. Its pathway is cofactor biosynthesis; (R)-pantothenate biosynthesis; (R)-pantoate from 3-methyl-2-oxobutanoate: step 1/2. Functionally, catalyzes the reversible reaction in which hydroxymethyl group from 5,10-methylenetetrahydrofolate is transferred onto alpha-ketoisovalerate to form ketopantoate. The sequence is that of 3-methyl-2-oxobutanoate hydroxymethyltransferase from Prochlorococcus marinus (strain MIT 9303).